Consider the following 327-residue polypeptide: MDKETNDNEYRRQSEHRTSAPKRKKKKKIRKLPIILLIVVILLIALVVYIVHSYNSGVEYAKKHAKDVKVHQFNGPVKNDGKISILVLGADKAQGGQSRTDSIMVVQYDFINKKMKMMSVMRDIYADIPGYGKHKINSAYALGGPELLRKTLDKNLGINPEYYAVVDFTGFEKMIDELMPEGVPINVEKDMSKNIGVSLKKGNHRLNGKELLGYARFRHDPEGDFGRVRRQQQVMQTLKKEMVNFRTVVKLPKVAGILRGYVNTNIPDSGIFQTGLSFGIRGEKDVKSLTVPIKNSYEDVNTNTDGSALQINKNTNKQAIKDFLDED.

Over residues 1–18 (MDKETNDNEYRRQSEHRT) the composition is skewed to basic and acidic residues. The segment at 1–24 (MDKETNDNEYRRQSEHRTSAPKRK) is disordered. The Cytoplasmic segment spans residues 1 to 31 (MDKETNDNEYRRQSEHRTSAPKRKKKKKIRK). Residues 32–52 (LPIILLIVVILLIALVVYIVH) traverse the membrane as a helical; Signal-anchor for type II membrane protein segment. Over 53–327 (SYNSGVEYAK…QAIKDFLDED (275 aa)) the chain is Extracellular.

It belongs to the LytR/CpsA/Psr (LCP) family.

The protein resides in the cell membrane. Its function is as follows. Involved in SarA attenuation. Affects resistance to oxacillin and teicoplanin, as well as the synthesis of virulence factors. The protein is Regulatory protein MsrR (msrR) of Staphylococcus aureus (strain NCTC 8325 / PS 47).